The chain runs to 274 residues: Secreted RxLR effector protein 144 (274 aa).

The N-terminal stretch at 1 to 20 (MRPWLLLLVGLSSFFALSTS) is a signal peptide. The RxLR-dEER motif lies at 49–72 (RKLRAFGGDTNTLKDSGKARREEK).

The protein belongs to the RxLR effector family.

It localises to the secreted. It is found in the host nucleus. The protein localises to the host cytoplasm. Its function is as follows. Secreted effector that completely suppresses the host cell death induced by cell death-inducing proteins. The chain is Secreted RxLR effector protein 144 from Plasmopara viticola (Downy mildew of grapevine).